The following is a 301-amino-acid chain: Probable alpha-L-glutamate ligase (301 aa).

The region spanning 104–287 (LQLLSRKGIG…VAGMIVEFIE (184 aa)) is the ATP-grasp domain. ATP contacts are provided by residues lysine 141, 178–179 (EF), aspartate 187, and 211–213 (RSN). Residues aspartate 248, glutamate 260, and asparagine 262 each coordinate Mg(2+). Aspartate 248, glutamate 260, and asparagine 262 together coordinate Mn(2+).

This sequence belongs to the RimK family. Mg(2+) serves as cofactor. It depends on Mn(2+) as a cofactor.

This is Probable alpha-L-glutamate ligase from Teredinibacter turnerae (strain ATCC 39867 / T7901).